Reading from the N-terminus, the 773-residue chain is Transducin-like enhancer protein 4 (773 aa).

3 disordered regions span residues 1 to 22 (MIRDLSKMYPQTRHPAPHQPAQ), 140 to 162 (HGHGLPVPLTPHPSGLQPPAIPP), and 182 to 357 (LPIK…DPLA). Residues 1–136 (MIRDLSKMYP…AIIGQQLQAQ (136 aa)) are q domain. The interval 137 to 204 (HLSHGHGLPV…HQRDRDSIKS (68 aa)) is GP domain. Over residues 183–202 (PIKDEKKHHDNDHQRDRDSI) the composition is skewed to basic and acidic residues. Positions 203-214 (KSSSVSPSASFR) are enriched in low complexity. The tract at residues 205 to 274 (SSVSPSASFR…SPRGSPAHSP (70 aa)) is ccN domain. Phosphoserine is present on residues Ser-208, Ser-212, Ser-216, and Ser-222. The span at 215 to 252 (GSEKHRNSTDYSSESKKQKTEEKEIAARYDSDGEKSDD) shows a compositional bias: basic and acidic residues. An N6-acetyllysine modification is found at Lys-237. Phosphoserine is present on Ser-245. A Phosphoserine; by CK2 modification is found at Ser-250. Ser-265 carries the post-translational modification Phosphoserine; by CDK1. Phosphoserine is present on residues Ser-269 and Ser-273. Residues 273–289 (SPRENGLDKTRLLKKDA) are compositionally biased toward basic and acidic residues. Positions 275 to 452 (RENGLDKTRL…PGGKPAYSFH (178 aa)) are SP domain. The residue at position 281 (Lys-281) is an N6-acetyllysine. Residues 290–305 (PISPASVASSSSTPSS) show a composition bias toward low complexity. Phosphoserine is present on Ser-292. Residues 317 to 328 (TTPVSKSNTPTP) are compositionally biased toward polar residues. At Thr-318 the chain carries Phosphothreonine. Phosphoserine occurs at positions 321 and 323. Phosphothreonine occurs at positions 325, 327, 334, and 340. Ser-419 carries the phosphoserine modification. 7 WD repeats span residues 485-523 (NHGEVVCAVTISNPTRHVYTGGKGCVKVWDISHPGNKSP), 531-570 (NRDNYIRSCRLLPDGRTLIVGGEASTLSIWDLAAPTPRIK), 575-614 (SSAPACYALAISPDSKVCFSCCSDGNIAVWDLHNQTLVRQ), 617-656 (GHTDGASCIDISNDGTKLWTGGLDNTVRSWDLREGRQLQQ), 658-697 (DFTSQIFSLGYCPTGEWLAVGMENSNVEVLHVTKPDKYQL), 699-738 (LHESCVLSLKFAHCGKWFVSTGKDNLLNAWRTPYGASIFQ), and 740-773 (KESSSVLSCDISVDDKYIVTGSGDKKATVYEVIY).

The protein belongs to the WD repeat Groucho/TLE family. Homooligomer and heterooligomer with other family members. Interacts with PAX5. Interacts with LEF1, TCF7, TCF7L1 and TCF7L2. Interacts with ZNF703; TLE4 may mediate ZNF703 transcriptional repression. Interacts with SIX3 and SIX6. Interacts with PAX2. Interacts with TLE1. Post-translationally, phosphorylated. PAX5 binding increases phosphorylation. In terms of processing, ubiquitinated by XIAP/BIRC4. Expressed in bone marrow-derived macrophages.

It is found in the nucleus. Its function is as follows. Transcriptional corepressor that binds to a number of transcription factors. Inhibits the transcriptional activation mediated by PAX5, and by CTNNB1 and TCF family members in Wnt signaling. The effects of full-length TLE family members may be modulated by association with dominant-negative AES. Essential for the transcriptional repressor activity of SIX3 during retina and lens development and for SIX3 transcriptional auto-repression. Involved in transcriptional repression of GNRHR and enhances MSX1-mediated transcriptional repression of CGA/alpha-GSU. This chain is Transducin-like enhancer protein 4 (Tle4), found in Mus musculus (Mouse).